A 372-amino-acid polypeptide reads, in one-letter code: Riboflavin biosynthesis protein RibD (372 aa).

One can recognise a CMP/dCMP-type deaminase domain in the interval 1–122 (MKDIFYMKKA…KWLKKHGILV (122 aa)). The deaminase stretch occupies residues 1–145 (MKDIFYMKKA…KGFFQRMTTG (145 aa)). Zn(2+) is bound at residue H50. The Proton donor role is filled by E52. The Zn(2+) site is built by C75 and C84. A reductase region spans residues 146 to 372 (IPWIKLKLAS…KLILTKHNSS (227 aa)). A154 is an NADP(+) binding site. S168 lines the substrate pocket. W170 is an NADP(+) binding site. R184 provides a ligand contact to substrate. NADP(+) is bound by residues T196 and D200. The substrate site is built by L204 and R207. S236 lines the NADP(+) pocket. Position 301 (E301) interacts with substrate. Residue 303–309 (GPSLSSS) coordinates NADP(+).

It in the N-terminal section; belongs to the cytidine and deoxycytidylate deaminase family. The protein in the C-terminal section; belongs to the HTP reductase family. The cofactor is Zn(2+).

The catalysed reaction is 2,5-diamino-6-hydroxy-4-(5-phosphoribosylamino)-pyrimidine + H2O + H(+) = 5-amino-6-(5-phospho-D-ribosylamino)uracil + NH4(+). It carries out the reaction 5-amino-6-(5-phospho-D-ribitylamino)uracil + NADP(+) = 5-amino-6-(5-phospho-D-ribosylamino)uracil + NADPH + H(+). It participates in cofactor biosynthesis; riboflavin biosynthesis; 5-amino-6-(D-ribitylamino)uracil from GTP: step 2/4. The protein operates within cofactor biosynthesis; riboflavin biosynthesis; 5-amino-6-(D-ribitylamino)uracil from GTP: step 3/4. Its function is as follows. Converts 2,5-diamino-6-(ribosylamino)-4(3h)-pyrimidinone 5'-phosphate into 5-amino-6-(ribosylamino)-2,4(1h,3h)-pyrimidinedione 5'-phosphate. The sequence is that of Riboflavin biosynthesis protein RibD (ribD) from Buchnera aphidicola subsp. Baizongia pistaciae (strain Bp).